The chain runs to 174 residues: uncharacterized protein (174 aa).

It belongs to the archaeal NMN adenylyltransferase family.

This is an uncharacterized protein from Archaeoglobus fulgidus (strain ATCC 49558 / DSM 4304 / JCM 9628 / NBRC 100126 / VC-16).